Consider the following 599-residue polypeptide: Pentatricopeptide repeat-containing protein At3g62470, mitochondrial (599 aa).

The N-terminal 99 residues, 1-99 (MAAAPWLHLS…RGFSSGSSNV (99 aa)), are a transit peptide targeting the mitochondrion. PPR repeat units lie at residues 194–228 (DSRT…GLLT), 230–262 (ETFT…KFKI), 263–293 (GVET…LKER), 297–331 (NMMT…GLKP), 332–366 (DIVA…GPCP), 367–401 (NVRS…GLQP), 402–436 (DAAV…GHPP), 437–471 (DGKT…EIEP), 472–506 (SIHT…GICP), and 507–541 (DDNS…GMKT).

This sequence belongs to the PPR family. P subfamily.

The protein resides in the mitochondrion. This Arabidopsis thaliana (Mouse-ear cress) protein is Pentatricopeptide repeat-containing protein At3g62470, mitochondrial.